A 397-amino-acid chain; its full sequence is Elongation factor Tu (397 aa).

Positions 10–207 (LPHVNVGTIG…TLDAYIPEPV (198 aa)) constitute a tr-type G domain. A G1 region spans residues 19 to 26 (GHVDHGKT). 19–26 (GHVDHGKT) contributes to the GTP binding site. Threonine 26 contacts Mg(2+). The G2 stretch occupies residues 60–64 (GITIN). A G3 region spans residues 81–84 (DCPG). GTP-binding positions include 81 to 85 (DCPGH) and 136 to 139 (NKAD). Residues 136–139 (NKAD) are G4. Residues 174–176 (SAR) are G5.

This sequence belongs to the TRAFAC class translation factor GTPase superfamily. Classic translation factor GTPase family. EF-Tu/EF-1A subfamily. Monomer.

The protein resides in the cytoplasm. It carries out the reaction GTP + H2O = GDP + phosphate + H(+). Functionally, GTP hydrolase that promotes the GTP-dependent binding of aminoacyl-tRNA to the A-site of ribosomes during protein biosynthesis. This Pseudomonas entomophila (strain L48) protein is Elongation factor Tu.